Reading from the N-terminus, the 124-residue chain is Small ribosomal subunit protein uS12 (124 aa).

Residue aspartate 89 is modified to 3-methylthioaspartic acid.

Belongs to the universal ribosomal protein uS12 family. In terms of assembly, part of the 30S ribosomal subunit. Contacts proteins S8 and S17. May interact with IF1 in the 30S initiation complex.

In terms of biological role, with S4 and S5 plays an important role in translational accuracy. Its function is as follows. Interacts with and stabilizes bases of the 16S rRNA that are involved in tRNA selection in the A site and with the mRNA backbone. Located at the interface of the 30S and 50S subunits, it traverses the body of the 30S subunit contacting proteins on the other side and probably holding the rRNA structure together. The combined cluster of proteins S8, S12 and S17 appears to hold together the shoulder and platform of the 30S subunit. This chain is Small ribosomal subunit protein uS12, found in Baumannia cicadellinicola subsp. Homalodisca coagulata.